We begin with the raw amino-acid sequence, 371 residues long: Phospholipid-transporting ATPase accessory subunit ivn1 (371 aa).

Residues 1–39 (MSQTEIVKKPKHKRFKRPDKSRFVQQTLPAWQFIFTPWT) are Cytoplasmic-facing. Residues 40-60 (VLPLLFLLGIVFAPLGAGMFV) form a helical membrane-spanning segment. Residues 61 to 325 (ASRRVKELRI…STTSVIGGKN (265 aa)) are Extracellular-facing. 2 disulfide bridges follow: Cys75–Cys111 and Cys166–Cys181. A glycan (N-linked (GlcNAc...) asparagine) is linked at Asn99. Asn190, Asn212, Asn216, Asn233, Asn284, and Asn297 each carry an N-linked (GlcNAc...) asparagine glycan. The chain crosses the membrane as a helical span at residues 326–346 (YFLGILYFVIGGLCAASGVIL). The Cytoplasmic segment spans residues 347–371 (SIACLIKPRRVGDPRYLSWNRGKSS).

The protein belongs to the CDC50/LEM3 family.

The protein resides in the endoplasmic reticulum membrane. In terms of biological role, accessory component of a P4-ATPase flippase complex which catalyzes the hydrolysis of ATP coupled to the transport of aminophospholipids from the lumenal to the cytosolic leaflet of membranes and ensures the maintenance of asymmetric distribution of phospholipids. This Schizosaccharomyces pombe (strain 972 / ATCC 24843) (Fission yeast) protein is Phospholipid-transporting ATPase accessory subunit ivn1 (ivn1).